The sequence spans 567 residues: Urease subunit alpha (567 aa).

Positions 129–567 (GGIDAHIHFI…LPLAQRYFLF (439 aa)) constitute a Urease domain. Ni(2+)-binding residues include histidine 134, histidine 136, and lysine 217. At lysine 217 the chain carries N6-carboxylysine. Residue histidine 219 coordinates substrate. Histidine 246 and histidine 272 together coordinate Ni(2+). The active-site Proton donor is the histidine 320. Aspartate 360 is a Ni(2+) binding site.

This sequence belongs to the metallo-dependent hydrolases superfamily. Urease alpha subunit family. In terms of assembly, heterotrimer of UreA (gamma), UreB (beta) and UreC (alpha) subunits. Three heterotrimers associate to form the active enzyme. Requires Ni cation as cofactor. In terms of processing, carboxylation allows a single lysine to coordinate two nickel ions.

The protein localises to the cytoplasm. It carries out the reaction urea + 2 H2O + H(+) = hydrogencarbonate + 2 NH4(+). Its pathway is nitrogen metabolism; urea degradation; CO(2) and NH(3) from urea (urease route): step 1/1. The polypeptide is Urease subunit alpha (Hahella chejuensis (strain KCTC 2396)).